The sequence spans 588 residues: Arginine--tRNA ligase (588 aa).

Residues 129–139 carry the 'HIGH' region motif; the sequence is PNIAKEMHVGH.

The protein belongs to the class-I aminoacyl-tRNA synthetase family. Monomer.

Its subcellular location is the cytoplasm. It catalyses the reaction tRNA(Arg) + L-arginine + ATP = L-arginyl-tRNA(Arg) + AMP + diphosphate. This chain is Arginine--tRNA ligase, found in Frankia casuarinae (strain DSM 45818 / CECT 9043 / HFP020203 / CcI3).